The sequence spans 190 residues: Shikimate kinase (190 aa).

13–18 is a binding site for ATP; the sequence is GSGKTT. T17 is a Mg(2+) binding site. Positions 35, 59, and 81 each coordinate substrate. Residue R119 participates in ATP binding. R138 contacts substrate. Q155 is a binding site for ATP.

Belongs to the shikimate kinase family. In terms of assembly, monomer. It depends on Mg(2+) as a cofactor.

It is found in the cytoplasm. The enzyme catalyses shikimate + ATP = 3-phosphoshikimate + ADP + H(+). It participates in metabolic intermediate biosynthesis; chorismate biosynthesis; chorismate from D-erythrose 4-phosphate and phosphoenolpyruvate: step 5/7. Catalyzes the specific phosphorylation of the 3-hydroxyl group of shikimic acid using ATP as a cosubstrate. The chain is Shikimate kinase from Nitrosococcus oceani (strain ATCC 19707 / BCRC 17464 / JCM 30415 / NCIMB 11848 / C-107).